A 408-amino-acid chain; its full sequence is Aurora kinase A-B (408 aa).

The segment covering 1 to 10 (MERAVKENHK) has biased composition (basic and acidic residues). The segment at 1-128 (MERAVKENHK…QGKTLAVPKE (128 aa)) is disordered. Positions 85 to 110 (GHQTSKPQGPNENRNPQQTSHSSTPN) are enriched in polar residues. In terms of domain architecture, Protein kinase spans 140-390 (FEIGRPLGKG…LKGVLEHPWI (251 aa)). ATP contacts are provided by residues Lys150, Lys169, and 217-220 (LDYA). Asp263 serves as the catalytic Proton acceptor. Asp281 is an ATP binding site. An activation segment region spans residues 287–300 (HAPSSRRTTLCGTL).

Belongs to the protein kinase superfamily. Ser/Thr protein kinase family. Aurora subfamily. Interacts with kif2c and kif11. In terms of processing, phosphorylated. Autophosphorylated on a serine residue.

The protein resides in the cytoplasm. It is found in the cytoskeleton. The protein localises to the spindle pole. It localises to the microtubule organizing center. Its subcellular location is the centrosome. It carries out the reaction L-seryl-[protein] + ATP = O-phospho-L-seryl-[protein] + ADP + H(+). It catalyses the reaction L-threonyl-[protein] + ATP = O-phospho-L-threonyl-[protein] + ADP + H(+). Its function is as follows. Mitotic serine/threonine kinases that contributes to the regulation of cell cycle progression. Associates with the centrosome and the spindle microtubules during mitosis and plays a critical role in various mitotic events including the establishment of mitotic spindle, centrosome duplication, centrosome separation as well as maturation, chromosomal alignment, spindle assembly checkpoint, and cytokinesis. Phosphorylates numerous target proteins. Important for microtubule formation and/or stabilization. This chain is Aurora kinase A-B (aurka-b), found in Xenopus laevis (African clawed frog).